A 332-amino-acid polypeptide reads, in one-letter code: Anthranilate phosphoribosyltransferase (332 aa).

5-phospho-alpha-D-ribose 1-diphosphate is bound by residues G80, 83-84 (GD), T88, 90-93 (NLST), 108-116 (KHGNRSASG), and S120. G80 lines the anthranilate pocket. S92 provides a ligand contact to Mg(2+). Residue N111 coordinates anthranilate. R166 provides a ligand contact to anthranilate. Residues D224 and E225 each coordinate Mg(2+).

It belongs to the anthranilate phosphoribosyltransferase family. As to quaternary structure, homodimer. Mg(2+) serves as cofactor.

The enzyme catalyses N-(5-phospho-beta-D-ribosyl)anthranilate + diphosphate = 5-phospho-alpha-D-ribose 1-diphosphate + anthranilate. It functions in the pathway amino-acid biosynthesis; L-tryptophan biosynthesis; L-tryptophan from chorismate: step 2/5. In terms of biological role, catalyzes the transfer of the phosphoribosyl group of 5-phosphorylribose-1-pyrophosphate (PRPP) to anthranilate to yield N-(5'-phosphoribosyl)-anthranilate (PRA). In Pyrobaculum calidifontis (strain DSM 21063 / JCM 11548 / VA1), this protein is Anthranilate phosphoribosyltransferase.